Reading from the N-terminus, the 213-residue chain is Protein brother (213 aa).

The interval 189 to 213 (HTPQTPPEDHHHRGGPGLPRGPMGW) is disordered. Gly residues predominate over residues 203 to 213 (GPGLPRGPMGW).

It belongs to the CBF-beta family.

The protein resides in the nucleus. Functionally, regulates the DNA-binding properties of Runt. This is Protein brother (Bro) from Drosophila melanogaster (Fruit fly).